The following is a 252-amino-acid chain: RNA-binding protein 2 (252 aa).

Disordered stretches follow at residues 1-34 (MADGFWNRQQQHLPPPGGMLKRPRTEYDTAPSGV) and 232-252 (RLQFSRSPGRRSGGPGPRGKR). One can recognise an RRM domain in the interval 152 to 238 (STLYVEGLPS…SYLRLQFSRS (87 aa)). Residues 242 to 252 (RSGGPGPRGKR) show a composition bias toward gly residues.

In terms of biological role, probable RNA-binding protein. This Medicago truncatula (Barrel medic) protein is RNA-binding protein 2.